The sequence spans 236 residues: Phosphoserine phosphatase (236 aa).

Asp30 acts as the Nucleophile in catalysis. Positions 30 and 32 each coordinate Mg(2+). The active-site Proton donor is Asp32. Substrate contacts are provided by residues Glu39, Arg76, 120 to 121, and Lys169; that span reads SG. Asp192 provides a ligand contact to Mg(2+). Asn195 is a binding site for substrate.

Belongs to the HAD-like hydrolase superfamily. SerB family. Mg(2+) is required as a cofactor.

It catalyses the reaction O-phospho-L-serine + H2O = L-serine + phosphate. The enzyme catalyses O-phospho-D-serine + H2O = D-serine + phosphate. It participates in amino-acid biosynthesis; L-serine biosynthesis; L-serine from 3-phospho-D-glycerate: step 3/3. The protein is Phosphoserine phosphatase of Polaromonas sp. (strain JS666 / ATCC BAA-500).